The primary structure comprises 583 residues: Sensor protein SrrB (583 aa).

Residues M1 to K11 lie on the Cytoplasmic side of the membrane. The chain crosses the membrane as a helical span at residues L12 to I32. The Extracellular portion of the chain corresponds to T33–T174. Residues I175–L195 form a helical membrane-spanning segment. At S196–E583 the chain is on the cytoplasmic side. One can recognise an HAMP domain in the interval S197–D249. A Histidine kinase domain is found at N366 to E583. H369 is subject to Phosphohistidine; by autocatalysis.

Its subcellular location is the cell membrane. The enzyme catalyses ATP + protein L-histidine = ADP + protein N-phospho-L-histidine.. Its function is as follows. Member of the two-component regulatory system SrrA/SrrB, which is involved in the global regulation of staphylococcal virulence factors in response to environmental oxygen levels as well as biofilm formation. Also plays an essential role in host-derived nitric oxide resistance by regulating hmp/flavohemoglobin, an enzyme that detoxifies nitric oxide by converting it to nitrate. Functions as a sensor protein kinase which is autophosphorylated at a histidine residue and transfers its phosphate group to SrrA. In turn, SrrA binds to the upstream promoter regions of the target genes to positively and negatively regulate their expression. The polypeptide is Sensor protein SrrB (srrB) (Staphylococcus aureus (strain MRSA252)).